The chain runs to 179 residues: Large ribosomal subunit protein uL5 (179 aa).

It belongs to the universal ribosomal protein uL5 family. In terms of assembly, part of the 50S ribosomal subunit; part of the 5S rRNA/L5/L18/L25 subcomplex. Contacts the 5S rRNA and the P site tRNA. Forms a bridge to the 30S subunit in the 70S ribosome.

In terms of biological role, this is one of the proteins that bind and probably mediate the attachment of the 5S RNA into the large ribosomal subunit, where it forms part of the central protuberance. In the 70S ribosome it contacts protein S13 of the 30S subunit (bridge B1b), connecting the 2 subunits; this bridge is implicated in subunit movement. Contacts the P site tRNA; the 5S rRNA and some of its associated proteins might help stabilize positioning of ribosome-bound tRNAs. This is Large ribosomal subunit protein uL5 from Salmonella arizonae (strain ATCC BAA-731 / CDC346-86 / RSK2980).